The chain runs to 408 residues: Phosphoglycerate kinase (408 aa).

Substrate is bound by residues 24–26 (DLN), R40, 63–66 (HLGR), R122, and R166. ATP is bound by residues K216, G304, E335, and 364–367 (GGDS).

It belongs to the phosphoglycerate kinase family. In terms of assembly, monomer.

The protein localises to the cytoplasm. The catalysed reaction is (2R)-3-phosphoglycerate + ATP = (2R)-3-phospho-glyceroyl phosphate + ADP. Its pathway is carbohydrate degradation; glycolysis; pyruvate from D-glyceraldehyde 3-phosphate: step 2/5. This chain is Phosphoglycerate kinase, found in Mycolicibacterium smegmatis (strain ATCC 700084 / mc(2)155) (Mycobacterium smegmatis).